The sequence spans 530 residues: Bifunctional purine biosynthesis protein PurH (530 aa).

One can recognise an MGS-like domain in the interval 1-148; that stretch reads MEQARPIRRA…KNHKDVAIVV (148 aa).

It belongs to the PurH family.

It catalyses the reaction (6R)-10-formyltetrahydrofolate + 5-amino-1-(5-phospho-beta-D-ribosyl)imidazole-4-carboxamide = 5-formamido-1-(5-phospho-D-ribosyl)imidazole-4-carboxamide + (6S)-5,6,7,8-tetrahydrofolate. The catalysed reaction is IMP + H2O = 5-formamido-1-(5-phospho-D-ribosyl)imidazole-4-carboxamide. The protein operates within purine metabolism; IMP biosynthesis via de novo pathway; 5-formamido-1-(5-phospho-D-ribosyl)imidazole-4-carboxamide from 5-amino-1-(5-phospho-D-ribosyl)imidazole-4-carboxamide (10-formyl THF route): step 1/1. It participates in purine metabolism; IMP biosynthesis via de novo pathway; IMP from 5-formamido-1-(5-phospho-D-ribosyl)imidazole-4-carboxamide: step 1/1. This Aeromonas salmonicida (strain A449) protein is Bifunctional purine biosynthesis protein PurH.